A 277-amino-acid chain; its full sequence is Sulfur carrier protein FdhD (277 aa).

Cys-121 (cysteine persulfide intermediate) is an active-site residue. Residue 260-265 coordinates Mo-bis(molybdopterin guanine dinucleotide); sequence FCKPGR.

This sequence belongs to the FdhD family.

It localises to the cytoplasm. Functionally, required for formate dehydrogenase (FDH) activity. Acts as a sulfur carrier protein that transfers sulfur from IscS to the molybdenum cofactor prior to its insertion into FDH. This Escherichia coli O6:H1 (strain CFT073 / ATCC 700928 / UPEC) protein is Sulfur carrier protein FdhD.